Reading from the N-terminus, the 397-residue chain is P2X purinoceptor 3 (397 aa).

Over 1–20 (MNCISDFFTYETTKSVVVKS) the chain is Cytoplasmic. A helical transmembrane segment spans residues 21-43 (WTIGIINRAVQLLIISYFVGWVF). Residues 44–322 (LHEKAYQVRD…AGKFNIIPTI (279 aa)) are Extracellular-facing. ATP-binding residues include Lys63 and Lys65. Cystine bridges form between Cys107–Cys153, Cys116–Cys137, and Cys122–Cys147. Mg(2+) is bound at residue Glu111. An N-linked (GlcNAc...) asparagine glycan is attached at Asn139. Asp158 is a binding site for Mg(2+). Residue Asp158 coordinates Ca(2+). The N-linked (GlcNAc...) asparagine glycan is linked to Asn170. Thr172 serves as a coordination point for ATP. A glycan (N-linked (GlcNAc...) asparagine) is linked at Asn194. Disulfide bonds link Cys203-Cys213 and Cys247-Cys256. ATP contacts are provided by Ser275, Asn279, and Arg281. A glycan (N-linked (GlcNAc...) asparagine) is linked at Asn290. Position 299 (Lys299) interacts with ATP. A helical membrane pass occupies residues 323 to 341 (ISSVAAFTSVGVGTVLCDI). The Cytoplasmic segment spans residues 342–397 (ILLNFLKGADHYKARKFEEVTETTLKGTASTNPVFASDQATVEKQSTDSGAYSIGH).

The protein belongs to the P2X receptor family. Homotrimer. Forms heterotrimer with P2RX2. Heterotrimeric P2RX2/3 has a ligand dose-response profile that is distinct from either homotrimeric P2RX2 or P2RX3. In terms of tissue distribution, selectively expressed in sensory ganglia.

The protein resides in the cell membrane. The enzyme catalyses Ca(2+)(in) = Ca(2+)(out). It catalyses the reaction Na(+)(in) = Na(+)(out). Has high sensitivity to ATP. Fast activation by external ATP. Exhibits rapid desensitization. Sensitives to the ATP agonist:alpha/beta-methylene-ATP. Subject to allosteric inhibition by AF-219. Mg(2+) and Ca(2+) slow deactivation of P2RX3. Extracellular ATP-activated non-selective cation channel. Plays particularly important role in sensory neurons where its activation is critical for gustatory, nociceptive responses, visceral reflexes and sensory hypersensitization. This is P2X purinoceptor 3 (P2rx3) from Rattus norvegicus (Rat).